The chain runs to 132 residues: Mediator of RNA polymerase II transcription subunit 11 (132 aa).

It belongs to the Mediator complex subunit 11 family. In terms of assembly, component of the Mediator complex.

Its subcellular location is the nucleus. Functionally, component of the Mediator complex, a coactivator involved in the regulated transcription of nearly all RNA polymerase II-dependent genes. Mediator functions as a bridge to convey information from gene-specific regulatory proteins to the basal RNA polymerase II transcription machinery. Mediator is recruited to promoters by direct interactions with regulatory proteins and serves as a scaffold for theQ9P086 assembly of a functional pre-initiation complex with RNA polymerase II and the general transcription factors. The chain is Mediator of RNA polymerase II transcription subunit 11 (MED11) from Aedes aegypti (Yellowfever mosquito).